The sequence spans 184 residues: Guanylate kinase (184 aa).

The region spanning 5-183 (KKLIILTGPS…TAKRIIKLIQ (179 aa)) is the Guanylate kinase-like domain. Residue 12–19 (GPSGVGKG) participates in ATP binding.

It belongs to the guanylate kinase family.

It localises to the cytoplasm. It carries out the reaction GMP + ATP = GDP + ADP. Essential for recycling GMP and indirectly, cGMP. In Prochlorococcus marinus (strain MIT 9312), this protein is Guanylate kinase.